The primary structure comprises 282 residues: Bifunctional protein FolD (282 aa).

NADP(+) is bound by residues 165–167, S190, and T231; that span reads GRS.

It belongs to the tetrahydrofolate dehydrogenase/cyclohydrolase family. Homodimer.

It catalyses the reaction (6R)-5,10-methylene-5,6,7,8-tetrahydrofolate + NADP(+) = (6R)-5,10-methenyltetrahydrofolate + NADPH. The catalysed reaction is (6R)-5,10-methenyltetrahydrofolate + H2O = (6R)-10-formyltetrahydrofolate + H(+). It functions in the pathway one-carbon metabolism; tetrahydrofolate interconversion. Catalyzes the oxidation of 5,10-methylenetetrahydrofolate to 5,10-methenyltetrahydrofolate and then the hydrolysis of 5,10-methenyltetrahydrofolate to 10-formyltetrahydrofolate. The protein is Bifunctional protein FolD of Clostridium beijerinckii (strain ATCC 51743 / NCIMB 8052) (Clostridium acetobutylicum).